The sequence spans 207 residues: Imidazole glycerol phosphate synthase subunit HisH (207 aa).

One can recognise a Glutamine amidotransferase type-1 domain in the interval 1-206 (MMIVIDYDAG…KEYVYENTAR (206 aa)). C79 (nucleophile) is an active-site residue. Active-site residues include H181 and E183.

Heterodimer of HisH and HisF.

Its subcellular location is the cytoplasm. The catalysed reaction is 5-[(5-phospho-1-deoxy-D-ribulos-1-ylimino)methylamino]-1-(5-phospho-beta-D-ribosyl)imidazole-4-carboxamide + L-glutamine = D-erythro-1-(imidazol-4-yl)glycerol 3-phosphate + 5-amino-1-(5-phospho-beta-D-ribosyl)imidazole-4-carboxamide + L-glutamate + H(+). The enzyme catalyses L-glutamine + H2O = L-glutamate + NH4(+). It participates in amino-acid biosynthesis; L-histidine biosynthesis; L-histidine from 5-phospho-alpha-D-ribose 1-diphosphate: step 5/9. Its function is as follows. IGPS catalyzes the conversion of PRFAR and glutamine to IGP, AICAR and glutamate. The HisH subunit catalyzes the hydrolysis of glutamine to glutamate and ammonia as part of the synthesis of IGP and AICAR. The resulting ammonia molecule is channeled to the active site of HisF. The chain is Imidazole glycerol phosphate synthase subunit HisH from Streptococcus sanguinis (strain SK36).